The primary structure comprises 465 residues: UDP-N-acetylmuramate--L-alanine ligase (465 aa).

114-120 (GAHGKTT) provides a ligand contact to ATP.

It belongs to the MurCDEF family.

Its subcellular location is the cytoplasm. The catalysed reaction is UDP-N-acetyl-alpha-D-muramate + L-alanine + ATP = UDP-N-acetyl-alpha-D-muramoyl-L-alanine + ADP + phosphate + H(+). It functions in the pathway cell wall biogenesis; peptidoglycan biosynthesis. Cell wall formation. The protein is UDP-N-acetylmuramate--L-alanine ligase of Syntrophomonas wolfei subsp. wolfei (strain DSM 2245B / Goettingen).